Here is a 93-residue protein sequence, read N- to C-terminus: Integration host factor subunit beta (93 aa).

This sequence belongs to the bacterial histone-like protein family. Heterodimer of an alpha and a beta chain.

Functionally, this protein is one of the two subunits of integration host factor, a specific DNA-binding protein that functions in genetic recombination as well as in transcriptional and translational control. The chain is Integration host factor subunit beta from Haemophilus ducreyi (strain 35000HP / ATCC 700724).